A 333-amino-acid chain; its full sequence is PDZ domain-containing protein GIPC1 (333 aa).

Basic residues predominate over residues 1–11; sequence MPLGLGRRKKA. The tract at residues 1–54 is disordered; sequence MPLGLGRRKKAPPLVENEEAEPGRGGLGVGEPGPLGGGGSGGPQMGLPPPPPAL. A compositionally biased stretch (gly residues) spans 23 to 44; sequence GRGGLGVGEPGPLGGGGSGGPQ. S68 bears the Phosphoserine mark. The region spanning 133 to 213 is the PDZ domain; the sequence is EVEVFKSEDA…GRTFTLKLTE (81 aa). Phosphoserine is present on residues S222, S225, and S232. Positions 223–244 are disordered; sequence QRSAGGRPGSGPQLGTGRGTLR. Residues 228–240 are compositionally biased toward gly residues; the sequence is GRPGSGPQLGTGR. T242 carries the post-translational modification Phosphothreonine. Phosphoserine is present on S247.

This sequence belongs to the GIPC family. Interacts with GLUT1 (C-terminus), ACTN1, KIF1B, MYO6, PLEKHG5, SDC4/syndecan-4 and SEMA4C/semaphorin-4C. Interacts with RGS19 C-terminus. Interacts with HTLV-I Tax through the PDZ domain. Widely expressed. Expressed in skeletal muscle (at protein level).

Its subcellular location is the cytoplasm. It localises to the membrane. Functionally, may be involved in G protein-linked signaling. In Homo sapiens (Human), this protein is PDZ domain-containing protein GIPC1 (GIPC1).